The chain runs to 172 residues: Bone marrow stromal antigen 2 (172 aa).

The Cytoplasmic segment spans residues 1–26; sequence MAPSFYHYLPVAMDERWEPKGWSIRR. K20 is covalently cross-linked (Glycyl lysine isopeptide (Lys-Gly) (interchain with G-Cter in ubiquitin)). Residues 27-47 traverse the membrane as a helical; Signal-anchor for type II membrane protein segment; it reads WWLVAAILVVLIGVVLVCLIV. Residues 48–152 lie on the Extracellular side of the membrane; it reads YFANAAHSEA…EISTTVQVNS (105 aa). N-linked (GlcNAc...) asparagine glycans are attached at residues N70 and N97. A coiled-coil region spans residues 103–149; that stretch reads LRDSLKKKVSQTQEQQARIKELENKIERLNQELENLRTQKEISTTVQ. Residue S152 is the site of GPI-anchor amidated serine attachment. The propeptide at 153–172 is removed in mature form; it reads GGSVVVSSLLVLVAVLFLHF.

Parallel homodimer; disulfide-linked. May form homotetramers under reducing conditions. Isoform 1 and isoform 2 form homodimers and also heterodimers with each other. Dimerization is essential for its antiviral activity. Interacts (via cytoplasmic domain) with ARHGAP44. Interacts with MMP14 (via C-terminal cytoplasmic tail). Interacts with LILRA4/ILT7. Interacts with RNF115. Post-translationally, N-glycosylated. In terms of processing, the GPI anchor is essential for its antiviral activity. In terms of tissue distribution, ubiquitously expressed, with highest levels in brain and liver. Present in liver (at protein level).

The protein localises to the golgi apparatus. It is found in the trans-Golgi network. It localises to the cell membrane. The protein resides in the late endosome. Its subcellular location is the membrane raft. The protein localises to the cytoplasm. It is found in the apical cell membrane. Functionally, IFN-induced antiviral host restriction factor which efficiently blocks the release of diverse mammalian enveloped viruses by directly tethering nascent virions to the membranes of infected cells. Acts as a direct physical tether, holding virions to the cell membrane and linking virions to each other. The tethered virions can be internalized by endocytosis and subsequently degraded or they can remain on the cell surface. In either case, their spread as cell-free virions is restricted. Its target viruses belong to diverse families, including retroviridae: human immunodeficiency virus type 1 (HIV-1), mouse mammary tumor virus (MMTV) and murine leukemia virus (MLV), filoviridae: ebola virus (EBOV), arenaviridae: lassa virus (LASV), and rhabdoviridae: vesicular stomatitis virus (VSV). Can inhibit cell surface proteolytic activity of MMP14 causing decreased activation of MMP15 which results in inhibition of cell growth and migration. Can stimulate signaling by LILRA4/ILT7 and consequently provide negative feedback to the production of IFN by plasmacytoid dendritic cells in response to viral infection. Plays a role in the organization of the subapical actin cytoskeleton in polarized epithelial cells. The polypeptide is Bone marrow stromal antigen 2 (Bst2) (Rattus norvegicus (Rat)).